Reading from the N-terminus, the 479-residue chain is Anaerobic nitric oxide reductase flavorubredoxin (479 aa).

The tract at residues 30 to 210 is zinc metallo-hydrolase; that stretch reads LRGSSYNSYL…PFSRLVTPKI (181 aa). Fe cation-binding residues include H79, E81, D83, H147, D166, and H227. The region spanning 254 to 393 is the Flavodoxin-like domain; the sequence is ITIFYDTMSN…LCRQHGRDIA (140 aa). FMN contacts are provided by residues 260-264 and 342-369; these read TMSNN and AFGS…EMSL. The 52-residue stretch at 423–474 folds into the Rubredoxin-like domain; it reads GPKMQCSVCQWIYDPALGEPLQDVAPGTPWSDVPDNFLCPECSLGKDVFDVL. Fe cation contacts are provided by C428, C431, C461, and C464.

This sequence in the N-terminal section; belongs to the zinc metallo-hydrolase group 3 family. Homotetramer. It depends on Fe cation as a cofactor. FMN is required as a cofactor.

The protein resides in the cytoplasm. The protein operates within nitrogen metabolism; nitric oxide reduction. Its function is as follows. Anaerobic nitric oxide reductase; uses NADH to detoxify nitric oxide (NO), protecting several 4Fe-4S NO-sensitive enzymes. Has at least 2 reductase partners, only one of which (NorW, flavorubredoxin reductase) has been identified. NO probably binds to the di-iron center; electrons enter from the NorW at rubredoxin and are transferred sequentially to the FMN center and the di-iron center. Also able to function as an aerobic oxygen reductase. In Salmonella typhi, this protein is Anaerobic nitric oxide reductase flavorubredoxin.